The following is a 312-amino-acid chain: Olfactory receptor 2B8 (312 aa).

At 1–25 (MDQKNGSSFTGFILLGFSDRPQLEL) the chain is on the extracellular side. Asn5 carries N-linked (GlcNAc...) asparagine glycosylation. Residues 26 to 49 (VLFVVLLIFYIFTLLGNKTIIVLS) traverse the membrane as a helical segment. Topologically, residues 50–57 (HLDPHLHT) are cytoplasmic. Residues 58 to 79 (PMYFFFSNLSFLDLCYTTGIVP) form a helical membrane-spanning segment. At 80 to 100 (QLLVNLRGADKSISYGGCVVQ) the chain is on the extracellular side. Cys97 and Cys189 are disulfide-bonded. The helical transmembrane segment at 101-120 (LYISLGLGSTECVLLGVMVF) threads the bilayer. Residues 121-139 (DRYAAVCRPLHYTVVMHPC) lie on the Cytoplasmic side of the membrane. The chain crosses the membrane as a helical span at residues 140–158 (LYVLMASTSWVIGFANSLL). Residues 159–195 (QTVLILLLTLCGRNKLEHFLCEVPPLLKLACVDTTMN) lie on the Extracellular side of the membrane. Residue Asn195 is glycosylated (N-linked (GlcNAc...) asparagine). A helical transmembrane segment spans residues 196 to 219 (ESELFFVSVIILLVPVALIIFSYS). Residues 220–236 (QIVRAVMRIKLATGQRK) lie on the Cytoplasmic side of the membrane. The helical transmembrane segment at 237–259 (VFGTCGSHLTVVSLFYGTAIYAY) threads the bilayer. The Extracellular segment spans residues 260 to 272 (LQPGNNYSQDQGK). Asn265 carries N-linked (GlcNAc...) asparagine glycosylation. Residues 273-292 (FISLFYTIITPMINPLIYTL) traverse the membrane as a helical segment. Topologically, residues 293 to 312 (RNKDVKGALKKVLWKNYDSR) are cytoplasmic.

It belongs to the G-protein coupled receptor 1 family.

The protein localises to the cell membrane. Odorant receptor. This chain is Olfactory receptor 2B8, found in Homo sapiens (Human).